The primary structure comprises 727 residues: Tubulin polyglutamylase TTLL11 (727 aa).

Positions 1 to 12 (MRRSSPEKKPEA) are enriched in basic and acidic residues. The interval 1–88 (MRRSSPEKKP…ARVVRRLPPA (88 aa)) is disordered. Residues 17–34 (DAAAAAAATAAATESLPA) are compositionally biased toward low complexity. Basic and acidic residues-rich tracts occupy residues 49–63 (DPERLELEEQPKDVG) and 72–81 (HAPEEGEARV). Residues 125 to 477 (PVTVDSSKAR…EVKVAVIRDT (353 aa)) enclose the TTL domain. Residues K246, 252–253 (QG), 279–282 (QEYI), and 292–294 (KFD) each bind ATP. Q252 serves as a coordination point for a protein. An L-glutamate-binding site is contributed by R318. 340–341 (TN) contributes to the ATP binding site. L-glutamate contacts are provided by Y342, S343, and K362. Residues D425, E438, and N440 each coordinate Mg(2+). A c-MTBD region region spans residues 464-566 (LVDEEVKVAV…SICLKQVFPK (103 aa)). K470 contributes to the L-glutamate binding site. 2 disordered regions span residues 530 to 551 (KSFTSKEDLNCDPTGGDSEPNP) and 694 to 727 (RPLQRNPPQMNRPEHSATGSSAPRVIGASKLSQS).

This sequence belongs to the tubulin--tyrosine ligase family. Mg(2+) serves as cofactor. In terms of tissue distribution, highly expressed in brain, kidney, liver, lung, muscle and testis. Expressed in heart, spleen and trachea. In the brain, expressed in ependymal cilia, cortex, corpus callosum and striatum.

It localises to the cytoplasm. The protein resides in the cytoskeleton. It is found in the cilium basal body. The catalysed reaction is L-glutamyl-[protein] + L-glutamate + ATP = gamma-L-glutamyl-L-glutamyl-[protein] + ADP + phosphate + H(+). It carries out the reaction (L-glutamyl)(n)-gamma-L-glutamyl-L-glutamyl-[protein] + L-glutamate + ATP = (L-glutamyl)(n+1)-gamma-L-glutamyl-L-glutamyl-[protein] + ADP + phosphate + H(+). Its function is as follows. Polyglutamylase which modifies tubulin, generating polyglutamate side chains of variable lengths on the gamma-carboxyl group of specific glutamate residues within the C-terminal tail of tubulin. Preferentially mediates ATP-dependent polyglutamate long side-chain elongation over the initiation step of the polyglutamylation reaction. Preferentially modifies the alpha-tubulin tail over a beta-tail. Required for CCSAP localization to both spindle and cilia microtubules. Promotes tubulin polyglutamylation which stimulates spastin/SPAST-mediated microtubule severing, thereby regulating microtubule functions. This chain is Tubulin polyglutamylase TTLL11, found in Mus musculus (Mouse).